Here is a 150-residue protein sequence, read N- to C-terminus: MNPHSWLILKRKVRFGDCDSAGVIHFHNLLRWAHESWEESIDIYGISHQVIFPSCHSHENQNILPIVNCEANFLLPIKLGDLLTVKIFPKKISNHLFQVNTLFLKDEIKVAEGKIIHCSLDMNSKLKVKLPDQLERWIEASNINTHLKEC.

Residue Asp-19 is part of the active site.

This sequence belongs to the 4-hydroxybenzoyl-CoA thioesterase family. DHNA-CoA hydrolase subfamily.

It catalyses the reaction 1,4-dihydroxy-2-naphthoyl-CoA + H2O = 1,4-dihydroxy-2-naphthoate + CoA + H(+). The protein operates within cofactor biosynthesis; phylloquinone biosynthesis. Its pathway is quinol/quinone metabolism; 1,4-dihydroxy-2-naphthoate biosynthesis; 1,4-dihydroxy-2-naphthoate from chorismate: step 7/7. Catalyzes the hydrolysis of 1,4-dihydroxy-2-naphthoyl-CoA (DHNA-CoA) to 1,4-dihydroxy-2-naphthoate (DHNA), a reaction involved in phylloquinone (vitamin K1) biosynthesis. This chain is 1,4-dihydroxy-2-naphthoyl-CoA hydrolase, found in Prochlorococcus marinus (strain MIT 9515).